A 250-amino-acid polypeptide reads, in one-letter code: 2,3-bisphosphoglycerate-dependent phosphoglycerate mutase (250 aa).

Substrate is bound by residues 8–15 (RHGESQWN), 21–22 (TG), arginine 60, 87–90 (ERHY), lysine 98, 114–115 (RR), and 183–184 (GN). The active-site Tele-phosphohistidine intermediate is histidine 9. Glutamate 87 serves as the catalytic Proton donor/acceptor.

It belongs to the phosphoglycerate mutase family. BPG-dependent PGAM subfamily. In terms of assembly, homodimer.

The catalysed reaction is (2R)-2-phosphoglycerate = (2R)-3-phosphoglycerate. Its pathway is carbohydrate degradation; glycolysis; pyruvate from D-glyceraldehyde 3-phosphate: step 3/5. Catalyzes the interconversion of 2-phosphoglycerate and 3-phosphoglycerate. This chain is 2,3-bisphosphoglycerate-dependent phosphoglycerate mutase, found in Bordetella pertussis (strain Tohama I / ATCC BAA-589 / NCTC 13251).